The primary structure comprises 101 residues: Urease subunit beta (101 aa).

The protein belongs to the urease beta subunit family. In terms of assembly, heterotrimer of UreA (gamma), UreB (beta) and UreC (alpha) subunits. Three heterotrimers associate to form the active enzyme.

Its subcellular location is the cytoplasm. It carries out the reaction urea + 2 H2O + H(+) = hydrogencarbonate + 2 NH4(+). It participates in nitrogen metabolism; urea degradation; CO(2) and NH(3) from urea (urease route): step 1/1. The polypeptide is Urease subunit beta (Chelativorans sp. (strain BNC1)).